The following is a 256-amino-acid chain: Protein US2 homolog (256 aa).

3 disordered regions span residues 100 to 120 (TRRP…SPPP), 167 to 186 (STAA…RRRP), and 236 to 256 (VRRR…CTIS). A compositionally biased stretch (low complexity) spans 167-180 (STAAGAPGAPTGAR). The span at 245 to 256 (NGRERAPRCTIS) shows a compositional bias: basic and acidic residues.

The protein belongs to the herpesviridae US2 family.

This Sus scrofa (Pig) protein is Protein US2 homolog (28K).